The primary structure comprises 176 residues: Adenine phosphoribosyltransferase (176 aa).

This sequence belongs to the purine/pyrimidine phosphoribosyltransferase family. As to quaternary structure, homodimer.

The protein localises to the cytoplasm. It carries out the reaction AMP + diphosphate = 5-phospho-alpha-D-ribose 1-diphosphate + adenine. It functions in the pathway purine metabolism; AMP biosynthesis via salvage pathway; AMP from adenine: step 1/1. Catalyzes a salvage reaction resulting in the formation of AMP, that is energically less costly than de novo synthesis. The polypeptide is Adenine phosphoribosyltransferase (Bacteroides thetaiotaomicron (strain ATCC 29148 / DSM 2079 / JCM 5827 / CCUG 10774 / NCTC 10582 / VPI-5482 / E50)).